A 301-amino-acid chain; its full sequence is Probable alpha-L-glutamate ligase (301 aa).

The 184-residue stretch at 104-287 (LQLLSRKGVG…VAGRIVSFIE (184 aa)) folds into the ATP-grasp domain. ATP contacts are provided by residues Lys-141, 178-179 (EF), Asp-187, and 211-213 (RSN). Positions 248, 260, and 262 each coordinate Mg(2+). Positions 248, 260, and 262 each coordinate Mn(2+).

Belongs to the RimK family. Requires Mg(2+) as cofactor. The cofactor is Mn(2+).

The polypeptide is Probable alpha-L-glutamate ligase (Thioalkalivibrio sulfidiphilus (strain HL-EbGR7)).